The chain runs to 283 residues: MKKKKLFLGTIISCVVLALSACGSSDNVVTSKVGNITEKELSKELRQKYGESTLYQMVLSKALLDKYKVSDEEAKKQVEEAKDKMGDNFKSTLEQVGLKNEDELKEKMKPEIAFEKAIKATVTEKDVKDNYKPEMKVSHILVKDEKTAKEVKEKVNNGEDFAALAKQYSEDTGSKEQGGEITGFAPGQTVKEFEEAAYKLDAGQVSEPVKTTYGYHIIKVTDKKELKPFDEVKDSIRKDIEQQRLQDTTGKWKQQVVNELLKDADIKVNDKEFKNTFEFLEKK.

Positions 1–21 (MKKKKLFLGTIISCVVLALSA) are cleaved as a signal peptide. Cysteine 22 carries N-palmitoyl cysteine lipidation. Residue cysteine 22 is the site of S-diacylglycerol cysteine attachment. The PpiC domain maps to 132–222 (KPEMKVSHIL…YGYHIIKVTD (91 aa)).

Belongs to the PrsA family.

The protein localises to the cell membrane. The catalysed reaction is [protein]-peptidylproline (omega=180) = [protein]-peptidylproline (omega=0). Functionally, plays a major role in protein secretion by helping the post-translocational extracellular folding of several secreted proteins. Important for the secretion of the protective antigen. The three PsrA proteins in this organism show different but overlapping substrate specificities. The polypeptide is Foldase protein PrsA 3 (prsA3) (Bacillus anthracis).